The sequence spans 95 residues: TBK1 inhibitor DP96R (95 aa).

The protein belongs to the asfivirus DP96R family.

Functionally, inhibits cGAS-STING-mediated type I IFN expression and NF-kB activation by inhibiting TBK1 and IKBKB/IKKB. Inhibits host TBK1 phosphorylation. The chain is TBK1 inhibitor DP96R from Ornithodoros (relapsing fever ticks).